Here is a 321-residue protein sequence, read N- to C-terminus: NADPH-dependent codeinone reductase 1-3 (321 aa).

NADPH is bound by residues Thr27 and Asp51. Residues Tyr56 and His119 each act as proton donor in the active site. His119 contacts substrate. Residues Gln187, Ser214, Leu216, Ser264, and Arg269 each contribute to the NADPH site. The segment at 300 to 321 is disordered; the sequence is ADFLLSPTGPFKTEEEFWDEKD.

This sequence belongs to the aldo/keto reductase family. In terms of tissue distribution, latex secreting cells (laticifer cells). Expressed constitutively in all organs with highest levels in capsules. Restricted to the parietal region of sieve elements adjacent or proximal to laticifers in roots, stems, leaves and carpels.

Its subcellular location is the cytoplasm. The protein localises to the cytosol. The enzyme catalyses codeine + NADP(+) = codeinone + NADPH + H(+). The catalysed reaction is neopine + NADP(+) = neopinone + NADPH + H(+). It catalyses the reaction morphine + NADP(+) = morphinone + NADPH + H(+). It carries out the reaction neomorphine + NADP(+) = neomorphinone + NADPH + H(+). Its pathway is alkaloid biosynthesis; morphine biosynthesis. Its function is as follows. NADPH-dependent codeinone reductase involved in biosynthesis of morphinan-type benzylisoquinoline and opiate alkaloids natural products. Reduces codeinone to codeine in the penultimate step in morphine biosynthesis. Can use morphinone, hydrocodone and hydromorphone as substrate during reductive reaction with NADPH as cofactor, and morphine and dihydrocodeine as substrate during oxidative reaction with NADP as cofactor. Converts morphinone to morphine, and neomorphinone to neomorphine. Reduces irreversibly neopinone, a spontaneous isomer of codeinone, to neopine; in planta, neopine levels are limited to low levels. The protein is NADPH-dependent codeinone reductase 1-3 of Papaver somniferum (Opium poppy).